The primary structure comprises 200 residues: Cytochrome c biogenesis ATP-binding export protein CcmA (200 aa).

One can recognise an ABC transporter domain in the interval 2–200; the sequence is LDVIELDFDY…NKADYEEYHL (199 aa). 34 to 41 provides a ligand contact to ATP; that stretch reads GSNGAGKT.

This sequence belongs to the ABC transporter superfamily. CcmA exporter (TC 3.A.1.107) family. The complex is composed of two ATP-binding proteins (CcmA) and two transmembrane proteins (CcmB).

Its subcellular location is the cell inner membrane. The catalysed reaction is heme b(in) + ATP + H2O = heme b(out) + ADP + phosphate + H(+). Its function is as follows. Part of the ABC transporter complex CcmAB involved in the biogenesis of c-type cytochromes; once thought to export heme, this seems not to be the case, but its exact role is uncertain. Responsible for energy coupling to the transport system. The sequence is that of Cytochrome c biogenesis ATP-binding export protein CcmA from Legionella pneumophila (strain Paris).